We begin with the raw amino-acid sequence, 345 residues long: Achaete-scute complex protein T4 (345 aa).

Residues 78–92 (SESVSSLSPGSSPAP) show a composition bias toward low complexity. The segment at 78-109 (SESVSSLSPGSSPAPYNVDQSQSVQRRNARER) is disordered. The bHLH domain occupies 99–162 (QSVQRRNARE…RIAVEYIRRL (64 aa)).

As to quaternary structure, efficient DNA binding requires dimerization with another bHLH protein. Interacts with da (via bHLH motif). Interacts with Bap60. In terms of tissue distribution, l(1)SC, SC and AC strongly label the presumptive stomatogastric nervous system, while ASE is more prominent in the presumptive procephalic lobe. Associates with the somatic nuclei through nuclear cycles 9 and 10. During nuclear cycle 11 distributes uniformly in the embryo.

In terms of biological role, AS-C proteins are involved in the determination of the neuronal precursors in the peripheral nervous system and the central nervous system. Also involved in sex determination and dosage compensation. This chain is Achaete-scute complex protein T4 (sc), found in Drosophila melanogaster (Fruit fly).